The primary structure comprises 199 residues: NADH-quinone oxidoreductase subunit C (199 aa).

It belongs to the complex I 30 kDa subunit family. As to quaternary structure, NDH-1 is composed of 14 different subunits. Subunits NuoB, C, D, E, F, and G constitute the peripheral sector of the complex.

It is found in the cell inner membrane. It catalyses the reaction a quinone + NADH + 5 H(+)(in) = a quinol + NAD(+) + 4 H(+)(out). Functionally, NDH-1 shuttles electrons from NADH, via FMN and iron-sulfur (Fe-S) centers, to quinones in the respiratory chain. The immediate electron acceptor for the enzyme in this species is believed to be ubiquinone. Couples the redox reaction to proton translocation (for every two electrons transferred, four hydrogen ions are translocated across the cytoplasmic membrane), and thus conserves the redox energy in a proton gradient. This is NADH-quinone oxidoreductase subunit C from Cupriavidus taiwanensis (strain DSM 17343 / BCRC 17206 / CCUG 44338 / CIP 107171 / LMG 19424 / R1) (Ralstonia taiwanensis (strain LMG 19424)).